We begin with the raw amino-acid sequence, 246 residues long: DNA polymerase sliding clamp (246 aa).

The protein belongs to the PCNA family. In terms of assembly, homotrimer. The subunits circularize to form a toroid; DNA passes through its center. Replication factor C (RFC) is required to load the toroid on the DNA.

Functionally, sliding clamp subunit that acts as a moving platform for DNA processing. Responsible for tethering the catalytic subunit of DNA polymerase and other proteins to DNA during high-speed replication. This Methanocella arvoryzae (strain DSM 22066 / NBRC 105507 / MRE50) protein is DNA polymerase sliding clamp.